We begin with the raw amino-acid sequence, 339 residues long: Dihydroorotate dehydrogenase (quinone) (339 aa).

FMN is bound by residues 62-66 and Thr86; that span reads AGMDK. Lys66 is a substrate binding site. Residue 111-115 coordinates substrate; that stretch reads NRMGF. Residues Asn139 and Asn172 each coordinate FMN. Asn172 is a substrate binding site. Catalysis depends on Ser175, which acts as the Nucleophile. Asn177 is a binding site for substrate. FMN contacts are provided by Lys217 and Thr245. 246–247 provides a ligand contact to substrate; the sequence is NT. FMN is bound by residues Gly268, Gly297, and 318-319; that span reads YS.

Belongs to the dihydroorotate dehydrogenase family. Type 2 subfamily. In terms of assembly, monomer. Requires FMN as cofactor.

The protein localises to the cell membrane. The catalysed reaction is (S)-dihydroorotate + a quinone = orotate + a quinol. It participates in pyrimidine metabolism; UMP biosynthesis via de novo pathway; orotate from (S)-dihydroorotate (quinone route): step 1/1. In terms of biological role, catalyzes the conversion of dihydroorotate to orotate with quinone as electron acceptor. This is Dihydroorotate dehydrogenase (quinone) from Shewanella sp. (strain ANA-3).